The sequence spans 300 residues: Inosose dehydratase (300 aa).

This sequence belongs to the IolE/MocC family. Glutathione serves as cofactor. It depends on Co(2+) as a cofactor. The cofactor is Mn(2+).

The catalysed reaction is scyllo-inosose = 3D-3,5/4-trihydroxycyclohexane-1,2-dione + H2O. Catalyzes the dehydration of inosose (2-keto-myo-inositol, 2KMI or 2,4,6/3,5-pentahydroxycyclohexanone) to 3D-(3,5/4)-trihydroxycyclohexane-1,2-dione (D-2,3-diketo-4-deoxy-epi-inositol). This chain is Inosose dehydratase, found in Mesomycoplasma hyopneumoniae (strain J / ATCC 25934 / NCTC 10110) (Mycoplasma hyopneumoniae).